We begin with the raw amino-acid sequence, 250 residues long: DNA repair protein RecO (250 aa).

Belongs to the RecO family.

Its function is as follows. Involved in DNA repair and RecF pathway recombination. The polypeptide is DNA repair protein RecO (Rhodopseudomonas palustris (strain ATCC BAA-98 / CGA009)).